Here is a 128-residue protein sequence, read N- to C-terminus: NADPH-dependent 7-cyano-7-deazaguanine reductase (128 aa).

Catalysis depends on C34, which acts as the Thioimide intermediate. D41 serves as the catalytic Proton donor. Substrate is bound by residues 56-58 (VEL) and 75-76 (HE).

Belongs to the GTP cyclohydrolase I family. QueF type 1 subfamily.

The protein resides in the cytoplasm. The enzyme catalyses 7-aminomethyl-7-carbaguanine + 2 NADP(+) = 7-cyano-7-deazaguanine + 2 NADPH + 3 H(+). It functions in the pathway tRNA modification; tRNA-queuosine biosynthesis. Catalyzes the NADPH-dependent reduction of 7-cyano-7-deazaguanine (preQ0) to 7-aminomethyl-7-deazaguanine (preQ1). The sequence is that of NADPH-dependent 7-cyano-7-deazaguanine reductase from Thermomicrobium roseum (strain ATCC 27502 / DSM 5159 / P-2).